A 227-amino-acid polypeptide reads, in one-letter code: (S)-2-haloacid dehalogenase (227 aa).

The active-site Nucleophile is the Asp-10. An (S)-2-haloacid is bound by residues 11 to 12, Arg-41, and 118 to 119; these read LY and SN. An important for catalytic activity region spans residues 175-180; the sequence is SSNAWD.

Belongs to the HAD-like hydrolase superfamily. S-2-haloalkanoic acid dehalogenase family. Homotetramer.

The catalysed reaction is an (S)-2-haloacid + H2O = a (2R)-2-hydroxycarboxylate + a halide anion + H(+). It catalyses the reaction (S)-2-chloropropanoate + H2O = (R)-lactate + chloride + H(+). Catalyzes the hydrolytic dehalogenation of small (S)-2-haloalkanoic acids to yield the corresponding (R)-2-hydroxyalkanoic acids. Acts on acids of short chain lengths, C(2) to C(4), with inversion of configuration at C-2. Active with 2-halogenated carboxylic acids and converts only the S-isomer (or L-isomer) of 2-chloropropionic acid with inversion of configuration to produce R-lactate (or D-isomer). This Pseudomonas putida (Arthrobacter siderocapsulatus) protein is (S)-2-haloacid dehalogenase.